The sequence spans 353 residues: uncharacterized protein (353 aa).

This is an uncharacterized protein from Methanocaldococcus jannaschii (strain ATCC 43067 / DSM 2661 / JAL-1 / JCM 10045 / NBRC 100440) (Methanococcus jannaschii).